Reading from the N-terminus, the 581-residue chain is Fibrous sheath-interacting protein 1 (581 aa).

The tract at residues 1 to 77 (MDIIKGNLDG…SNDDKQESCS (77 aa)) is disordered. Residues 14–30 (PASNSRIRPGSRSSNAS) show a composition bias toward polar residues. A compositionally biased stretch (basic and acidic residues) spans 52 to 77 (GKEDHSESSNTENRRTSNDDKQESCS). At S87 the chain carries Phosphoserine. Positions 105–153 (EPKLKELDSQLQDAIQKMKKLDKILAKKQRREKEIKKQGLEMRIKLWEE) form a coiled coil. Disordered regions lie at residues 338 to 365 (SSFSPRLENRNNQKPDRDGERNMEVTPG) and 555 to 581 (HLKLSSPENTIADEQETKDAAEECKEP). Basic and acidic residues-rich tracts occupy residues 344–360 (LENRNNQKPDRDGERNM) and 569–581 (QETKDAAEECKEP).

Belongs to the FSIP1 family.

This is Fibrous sheath-interacting protein 1 (FSIP1) from Homo sapiens (Human).